The sequence spans 302 residues: Sulfate adenylyltransferase subunit 2 (302 aa).

It belongs to the PAPS reductase family. CysD subfamily. In terms of assembly, heterodimer composed of CysD, the smaller subunit, and CysN.

The enzyme catalyses sulfate + ATP + H(+) = adenosine 5'-phosphosulfate + diphosphate. It functions in the pathway sulfur metabolism; hydrogen sulfide biosynthesis; sulfite from sulfate: step 1/3. Its function is as follows. With CysN forms the ATP sulfurylase (ATPS) that catalyzes the adenylation of sulfate producing adenosine 5'-phosphosulfate (APS) and diphosphate, the first enzymatic step in sulfur assimilation pathway. APS synthesis involves the formation of a high-energy phosphoric-sulfuric acid anhydride bond driven by GTP hydrolysis by CysN coupled to ATP hydrolysis by CysD. This chain is Sulfate adenylyltransferase subunit 2, found in Shewanella pealeana (strain ATCC 700345 / ANG-SQ1).